Reading from the N-terminus, the 216-residue chain is N-glycosylase/DNA lyase (216 aa).

8-oxoguanine-binding residues include Gln27, Ser48, and Trp59. The segment at 106–170 is helix-hairpin-helix; sequence EHYYENMVAL…LDYRLKKINP (65 aa). Lys130 functions as the Schiff-base intermediate with DNA in the catalytic mechanism. Phe134 and Pro160 together coordinate 8-oxoguanine. Asp162 is an active-site residue. 2 residues coordinate 8-oxoguanine: Asp190 and Trp194.

Belongs to the archaeal N-glycosylase/DNA lyase (AGOG) family.

The enzyme catalyses 2'-deoxyribonucleotide-(2'-deoxyribose 5'-phosphate)-2'-deoxyribonucleotide-DNA = a 3'-end 2'-deoxyribonucleotide-(2,3-dehydro-2,3-deoxyribose 5'-phosphate)-DNA + a 5'-end 5'-phospho-2'-deoxyribonucleoside-DNA + H(+). Functionally, DNA repair enzyme that is part of the base excision repair (BER) pathway; protects from oxidative damage by removing the major product of DNA oxidation, 8-oxoguanine (GO), from single- and double-stranded DNA substrates. This chain is N-glycosylase/DNA lyase, found in Nanoarchaeum equitans (strain Kin4-M).